Reading from the N-terminus, the 281-residue chain is MKKTIYKVLVSFYQYVGLGKKFHPSHDTVLIIGGSSNELGIELCETFIEDYHTKVINIDTIDSINGKNARRSEKLYTFISCKDFSDIKCLEESMLYLQNLEIIPTVLINNMQEGIESTLLKEDKFLRLDEESLNEFEKIVRYNLQSVILITKFCLSNIFPKVQAEAQEKAKGFYIVNISSVLTLKPCKSGTHFITSKCGINSFHDGITSELKLKDSNLNVKTLIAYLPSFESEAHWKRLSPSISKHLVHCLLEGRYGDTILESKRSIGDILLITGFKSSFT.

NADP(+)-binding residues include leucine 39, threonine 60, lysine 67, lysine 152, and lysine 197. The active-site Lowers pKa of active site Tyr is lysine 197.

Belongs to the short-chain dehydrogenases/reductases (SDR) family.

May be involved in the regulation of dNTP production. Induces the SOS system when expressed in E.coli, therefore, it may play a role in DNA metabolism and/or in genome stability. This Saccharomyces cerevisiae (strain ATCC 204508 / S288c) (Baker's yeast) protein is Oxidoreductase-like protein SRL4 (SRL4).